The primary structure comprises 294 residues: Phosphate acetyltransferase (294 aa).

It belongs to the phosphate acetyltransferase and butyryltransferase family. As to quaternary structure, homotetramer.

The protein localises to the cytoplasm. The enzyme catalyses acetyl-CoA + phosphate = acetyl phosphate + CoA. Its pathway is metabolic intermediate biosynthesis; acetyl-CoA biosynthesis; acetyl-CoA from acetate: step 2/2. In terms of biological role, in addition to acetyl-CoA (100%), the enzyme accepts propionyl-CoA (60%) and butyryl-CoA (30%). This is Phosphate acetyltransferase (pta) from Thermotoga maritima (strain ATCC 43589 / DSM 3109 / JCM 10099 / NBRC 100826 / MSB8).